Consider the following 269-residue polypeptide: Eukaryotic translation initiation factor 3 subunit G-1 (269 aa).

The RRM domain maps to 188–266; the sequence is AAIRISNLSE…LILSVEWSKP (79 aa).

The protein belongs to the eIF-3 subunit G family. Component of the eukaryotic translation initiation factor 3 (eIF-3) complex. The eIF-3 complex interacts with pix.

The protein resides in the cytoplasm. In terms of biological role, RNA-binding component of the eukaryotic translation initiation factor 3 (eIF-3) complex, which is involved in protein synthesis of a specialized repertoire of mRNAs and, together with other initiation factors, stimulates binding of mRNA and methionyl-tRNAi to the 40S ribosome. The eIF-3 complex specifically targets and initiates translation of a subset of mRNAs involved in cell proliferation. This subunit can bind 18S rRNA. The sequence is that of Eukaryotic translation initiation factor 3 subunit G-1 from Drosophila grimshawi (Hawaiian fruit fly).